Here is a 130-residue protein sequence, read N- to C-terminus: Small ribosomal subunit protein uS8A (130 aa).

This sequence belongs to the universal ribosomal protein uS8 family. In terms of assembly, component of the small ribosomal subunit (SSU). Mature ribosomes consist of a small (40S) and a large (60S) subunit. The 40S subunit contains about 32 different proteins and 1 molecule of RNA (18S). The 60S subunit contains 45 different proteins and 3 molecules of RNA (25S, 5.8S and 5S).

It localises to the cytoplasm. Functionally, component of the ribosome, a large ribonucleoprotein complex responsible for the synthesis of proteins in the cell. The small ribosomal subunit (SSU) binds messenger RNAs (mRNAs) and translates the encoded message by selecting cognate aminoacyl-transfer RNA (tRNA) molecules. The large subunit (LSU) contains the ribosomal catalytic site termed the peptidyl transferase center (PTC), which catalyzes the formation of peptide bonds, thereby polymerizing the amino acids delivered by tRNAs into a polypeptide chain. The nascent polypeptides leave the ribosome through a tunnel in the LSU and interact with protein factors that function in enzymatic processing, targeting, and the membrane insertion of nascent chains at the exit of the ribosomal tunnel. The protein is Small ribosomal subunit protein uS8A (RPS22A) of Candida albicans (strain SC5314 / ATCC MYA-2876) (Yeast).